The following is a 513-amino-acid chain: ATP synthase subunit alpha (513 aa).

Position 169-176 (169-176) interacts with ATP; that stretch reads GDRQTGKT.

This sequence belongs to the ATPase alpha/beta chains family. In terms of assembly, F-type ATPases have 2 components, CF(1) - the catalytic core - and CF(0) - the membrane proton channel. CF(1) has five subunits: alpha(3), beta(3), gamma(1), delta(1), epsilon(1). CF(0) has three main subunits: a(1), b(2) and c(9-12). The alpha and beta chains form an alternating ring which encloses part of the gamma chain. CF(1) is attached to CF(0) by a central stalk formed by the gamma and epsilon chains, while a peripheral stalk is formed by the delta and b chains.

It is found in the cell inner membrane. The enzyme catalyses ATP + H2O + 4 H(+)(in) = ADP + phosphate + 5 H(+)(out). Produces ATP from ADP in the presence of a proton gradient across the membrane. The alpha chain is a regulatory subunit. The sequence is that of ATP synthase subunit alpha from Pectobacterium carotovorum subsp. carotovorum (strain PC1).